Reading from the N-terminus, the 409-residue chain is Tyrosine--tRNA ligase (409 aa).

Residues 54–63 (PTAPDIHLGH) carry the 'HIGH' region motif. The 'KMSKS' region motif lies at 238-242 (KMSKS). ATP is bound at residue lysine 241. In terms of domain architecture, S4 RNA-binding spans 347–407 (MGILHVLRAS…GKRKFARVNL (61 aa)).

Belongs to the class-I aminoacyl-tRNA synthetase family. TyrS type 2 subfamily. Homodimer.

Its subcellular location is the cytoplasm. It carries out the reaction tRNA(Tyr) + L-tyrosine + ATP = L-tyrosyl-tRNA(Tyr) + AMP + diphosphate + H(+). Catalyzes the attachment of tyrosine to tRNA(Tyr) in a two-step reaction: tyrosine is first activated by ATP to form Tyr-AMP and then transferred to the acceptor end of tRNA(Tyr). This is Tyrosine--tRNA ligase from Bordetella avium (strain 197N).